A 204-amino-acid polypeptide reads, in one-letter code: Nicotine blue oxidoreductase (204 aa).

In terms of assembly, homotetramer. The cofactor is FMN.

The catalysed reaction is 3,3'-bipyridine-2,2',5,5',6,6'-hexol + NADP(+) = (E)-2,2',5,5'-tetrahydroxy-6H,6'H-(3,3'-bipyridinylidene)-6,6'-dione + NADPH + 3 H(+). It carries out the reaction 3,3'-bipyridine-2,2',5,5',6,6'-hexol + NAD(+) = (E)-2,2',5,5'-tetrahydroxy-6H,6'H-(3,3'-bipyridinylidene)-6,6'-dione + NADH + 3 H(+). It functions in the pathway alkaloid degradation; nicotine degradation. Its function is as follows. Catalyzes the reduction of nicotine blue to its hydroquinone form. Nicotine blue is the name given to the compound formed by the autocatalytic condensation of two molecules of 2,3,6-trihydroxypyridine, an intermediate in the nicotine degradation pathway. May play a role in preventing the intracellular formation of nicotine blue semiquinone radicals, which by redox cycling would lead to the formation of toxic reactive oxygen species. Besides nicotine blue, several other quinones are reduced by nboR. The polypeptide is Nicotine blue oxidoreductase (nboR) (Paenarthrobacter nicotinovorans (Arthrobacter nicotinovorans)).